A 148-amino-acid polypeptide reads, in one-letter code: MNLHFYSTLRFTVALAAGLLFGFGLALSEMINPIRVLSFLNVASGHWNPSLLFVLGSALAVAFPGMALQRRLKRPLLDECFHLPSKKVIDRRIVFGSAIFGTGWGLTGLCPGPAIASLSTGLGSVLLFVAAMAAGMIIHDRIVVRSLS.

The next 4 membrane-spanning stretches (helical) occupy residues F11–I31, N48–L68, I93–P113, and L118–I138.

This sequence belongs to the TsuA/YedE (TC 9.B.102) family.

Its subcellular location is the cell inner membrane. This chain is Probable transporter PD_1893, found in Xylella fastidiosa (strain Temecula1 / ATCC 700964).